A 185-amino-acid chain; its full sequence is NAD(P)H-quinone oxidoreductase subunit J (185 aa).

The protein belongs to the complex I 30 kDa subunit family. As to quaternary structure, NDH-1 can be composed of about 15 different subunits; different subcomplexes with different compositions have been identified which probably have different functions.

It localises to the cellular thylakoid membrane. It catalyses the reaction a plastoquinone + NADH + (n+1) H(+)(in) = a plastoquinol + NAD(+) + n H(+)(out). The catalysed reaction is a plastoquinone + NADPH + (n+1) H(+)(in) = a plastoquinol + NADP(+) + n H(+)(out). Its function is as follows. NDH-1 shuttles electrons from an unknown electron donor, via FMN and iron-sulfur (Fe-S) centers, to quinones in the respiratory and/or the photosynthetic chain. The immediate electron acceptor for the enzyme in this species is believed to be plastoquinone. Couples the redox reaction to proton translocation, and thus conserves the redox energy in a proton gradient. Cyanobacterial NDH-1 also plays a role in inorganic carbon-concentration. This is NAD(P)H-quinone oxidoreductase subunit J from Prochlorococcus marinus (strain MIT 9303).